Consider the following 129-residue polypeptide: MATWDDVARIVGGLPLTAEQAPHDWRVGRKLLAWERPLRKSDREALTRAGSEPPSGDIVGVRVSDEGVKFALIADEPGVYFTTPHFDGYPAVLVRLAEIEVRDLEELITEAWLMQAPKQLVQAFLANSG.

This is an uncharacterized protein from Mycobacterium bovis (strain ATCC BAA-935 / AF2122/97).